We begin with the raw amino-acid sequence, 431 residues long: Divergent protein kinase domain 1B (431 aa).

Topologically, residues 1-30 (MRKLRRLVHMVLFCPISKGLQSRLPGIKVK) are cytoplasmic. The May mediate ER retention signature appears at 5–6 (RR). A helical transmembrane segment spans residues 31 to 51 (YLFLAWLSVFVGSWVVYMHYS). The Lumenal portion of the chain corresponds to 52-431 (SYSELCRGHV…WKKISNTKYS (380 aa)). Intrachain disulfides connect Cys57-Cys94 and Cys62-Cys117.

The protein belongs to the DIPK family. Among the many cysteines in the lumenal domain, most are probably involved in disulfide bonds.

It localises to the endoplasmic reticulum membrane. In Xenopus tropicalis (Western clawed frog), this protein is Divergent protein kinase domain 1B (dipk1b).